Consider the following 1450-residue polypeptide: Protein TIC 214 (1450 aa).

Transmembrane regions (helical) follow at residues 29–49 (FGLY…IVVI), 61–81 (VMAF…IYYT), 86–106 (LFIK…FYWQ), 132–152 (FFDS…PIFF), 166–186 (LNFF…FFNA), and 213–233 (IIPI…HIPF).

This sequence belongs to the TIC214 family. As to quaternary structure, part of the Tic complex.

The protein resides in the plastid. The protein localises to the chloroplast inner membrane. Involved in protein precursor import into chloroplasts. May be part of an intermediate translocation complex acting as a protein-conducting channel at the inner envelope. The polypeptide is Protein TIC 214 (Chaetosphaeridium globosum (Charophycean green alga)).